The sequence spans 815 residues: SNF1 protein kinase subunit beta-1 (815 aa).

The segment covering 1 to 11 (MGNSPSTQDPS) has biased composition (polar residues). 2 disordered regions span residues 1–88 (MGNS…TIDK) and 117–146 (SDDHDVGAPEEQVKSPSFLSPGPSMATVKR). Gly-2 is lipidated: N-myristoyl glycine. Residues 12 to 31 (HSTKKEHGHHFHDAFNKDRQ) show a composition bias toward basic and acidic residues. The segment covering 32–42 (GSITSQLFNNR) has biased composition (polar residues). A Phosphoserine modification is found at Ser-33. 2 stretches are compositionally biased toward basic and acidic residues: residues 72–88 (PSTDCDGRMSSDTTIDK) and 117–129 (SDDHDVGAPEEQV). Phosphoserine is present on residues Ser-181, Ser-198, Ser-200, Ser-206, Ser-209, and Ser-220. Disordered regions lie at residues 311–335 (HANNNGNIENNTRNKGNAGGSNDDF) and 362–389 (KHHNKTKKAQNKKIRSVSNSRRSSFASL). A compositionally biased stretch (low complexity) spans 313–326 (NNNGNIENNTRNKG). Ser-331 carries the post-translational modification Phosphoserine. A compositionally biased stretch (basic residues) spans 363–376 (HHNKTKKAQNKKIR). Positions 377 to 389 (SVSNSRRSSFASL) are enriched in low complexity. A kinase-interacting sequence (KIS); required for interaction with SNF1 region spans residues 473–716 (VSTDIASALK…LQQGGNIDAE (244 aa)). Phosphoserine occurs at positions 494 and 497. The tract at residues 581 to 616 (EPTLDEELPKRPELKRFPSSSRKSSYYSAKGVERPS) is disordered. Residues 587 to 596 (ELPKRPELKR) show a composition bias toward basic and acidic residues. Residues 599-608 (SSSRKSSYYS) show a composition bias toward low complexity. The residue at position 643 (Ser-643) is a Phosphoserine. The interval 724 to 804 (SRYPVPDLPI…FITQVVYAPC (81 aa)) is association with SNF1 kinase complex (ASC) domain; required for interaction with SNF4.

It belongs to the 5'-AMP-activated protein kinase beta subunit family. Component of the SNF1 kinase complex, a heterotrimeric complex composed of the catalytic alpha subunit SNF1, one of the three related beta subunits SIP1, SIP2 or GAL83, and the regulatory gamma subunit SNF4. The beta subunit serves as a bridge between the catalytic and the regulatory subunit. Interacts (via KIS domain) with SNF1. Interacts (via ASC domain) with SNF4. In terms of processing, phosphorylated by SNF1 in vitro.

Its subcellular location is the cytoplasm. The protein localises to the vacuole membrane. Its function is as follows. Beta subunit of the SNF1 kinase complex, which is required for transcriptional, metabolic, and developmental adaptations in response to glucose limitation. Has a structural role, mediating heterotrimer formation, and a regulatory role, defining carbon source-regulated subcellular location and substrate specificity of the SNF1 kinase complex. Promotes the PKA-regulated relocalization of the SNF1 kinase complex to the vacuolar membrane in response to various types of carbon stress. The polypeptide is SNF1 protein kinase subunit beta-1 (SIP1) (Saccharomyces cerevisiae (strain ATCC 204508 / S288c) (Baker's yeast)).